We begin with the raw amino-acid sequence, 318 residues long: Small ribosomal subunit protein RACK1 (318 aa).

WD repeat units follow at residues 11-44 (GHRGWVTSLACPQTPETATKVVSTSRDKTLLSWG), 65-95 (GHSAFVSDVALSNNGNFAVSASWDHSLRLWN), 107-137 (GHTKDVLSVAFSPDNRQIVSGGRDNALRVWN), 150-182 (AHTDWVSCVRFSPSLDAPVIVSGGWDNLVKVWD), 194-224 (GHTNYVTSVTVSPDGSLCASSDKDGVARLWD), 235-264 (AAGAPINQICFSPNRYWMCAATEKGIRIFD), and 282-315 (KKIVPECVSIAWSADGSTLYSGYTDNVIRVWGVS).

It belongs to the WD repeat G protein beta family. Ribosomal protein RACK1 subfamily.

In Trypanosoma brucei brucei, this protein is Small ribosomal subunit protein RACK1.